Consider the following 885-residue polypeptide: DNA polymerase eta (885 aa).

A UmuC domain is found at 18–274 (VLLVDMDCFF…LPVGKIKGLG (257 aa)). Residues Asp-22 and Met-23 each contribute to the Mg(2+) site. Residues Asp-22 and Met-23 each contribute to the Mn(2+) site. Position 70 (Arg-70) interacts with a 2'-deoxyribonucleoside 5'-triphosphate. Residues Asp-125 and Glu-126 each coordinate Mg(2+). 2 residues coordinate Mn(2+): Asp-125 and Glu-126. The active site involves Glu-126. 2 disordered regions span residues 599–653 (AIEA…DLYV) and 658–677 (VPPT…RKFD). Residues 608–618 (FEEDTEEETEL) are compositionally biased toward acidic residues. Residues 628 to 649 (EGQSSDAGQEQDPNTLNDSTGN) show a composition bias toward polar residues. Residues 701 to 737 (DILPTIKCDQCGANIPDEVKSLQTHRDHHFAQELSRT) form a UBZ3-type 1 zinc finger. Zn(2+) is bound by residues Cys-708, Cys-711, His-725, and His-729. The tract at residues 722–783 (LQTHRDHHFA…YSTAPPSNSI (62 aa)) is disordered. The span at 739 to 748 (RSTEREERTQ) shows a compositional bias: basic and acidic residues. The span at 766–780 (TAGSGSSSYSTAPPS) shows a compositional bias: low complexity. The UBZ3-type 2 zinc finger occupies 798 to 832 (SDPQMNQCPECKAFIKCVDMPEHLDYHVARNLQRE). Residues Cys-805, Cys-808, His-820, and His-824 each contribute to the Zn(2+) site. The segment at 846 to 870 (NKEKISPVQPKKQSQKKLNSTISAS) is disordered.

This sequence belongs to the DNA polymerase type-Y family. As to quaternary structure, interacts (via C-terminus) with nopo. Mg(2+) serves as cofactor. The cofactor is Mn(2+). In terms of processing, ubiquitination enhanced by nopo. In terms of tissue distribution, expressed in ovaries and testes.

The protein localises to the nucleus. The catalysed reaction is DNA(n) + a 2'-deoxyribonucleoside 5'-triphosphate = DNA(n+1) + diphosphate. The enzyme in complex with the DNA substrate binds a third divalent metal cation. This binding is essential for catalyzing the DNA synthesis. In terms of biological role, DNA polymerase specifically involved in the DNA repair by translesion synthesis (TLS). Plays an important role in translesion synthesis, where the normal high-fidelity DNA polymerases cannot proceed and DNA synthesis stalls. Inserts one or 2 nucleotide(s) opposite the lesion. During homologous recombination (HR) repair, has a overlapping role with the error-prone translesion polymerase PolZ1/DNApol-zeta to initiate repair synthesis that is completed by end joining or another polymerase that can bind and reinitiate synthesis. Particularly important for the repair of UV-induced pyrimidine dimers and for hydroxyurea (HU)-induced DNA damage. Although inserts the correct base, may cause base transitions and transversions depending upon the context. Forms a Schiff base with 5'-deoxyribose phosphate at abasic sites, but does not have any lyase activity, preventing the release of the 5'-deoxyribose phosphate (5'-dRP) residue. This covalent trapping of the enzyme by the 5'-dRP residue inhibits its DNA synthetic activity during base excision repair, thereby avoiding high incidence of mutagenesis. This is DNA polymerase eta from Drosophila melanogaster (Fruit fly).